The following is a 666-amino-acid chain: Probable cytochrome c oxidase subunit 1 (666 aa).

A run of 2 helical transmembrane segments spans residues 16-36 (IPLI…VWVV) and 57-77 (IGVM…SDAI). His-105 is a binding site for heme b. A run of 13 helical transmembrane segments spans residues 108–128 (IMIF…VVPL), 142–162 (SVGF…LVIG), 192–212 (SLQI…TTVL), 234–254 (SNLL…MLLL), 277–297 (LIWA…FGIF), 315–335 (MVLA…HHFF), 346–366 (IFGI…YNWL), 380–400 (MLWA…GVLV), 413–433 (MFLV…GAFA), 456–476 (FWFT…AGML), 493–513 (WMLV…CQIM), 591–611 (SPTG…LIWH), and 612–632 (IWWM…VFAW). Cu cation is bound by residues His-283, Tyr-287, His-332, and His-333. Residues 283 to 287 (HPEVY) constitute a cross-link (1'-histidyl-3'-tyrosine (His-Tyr)). Positions 418 and 420 each coordinate heme b.

It belongs to the heme-copper respiratory oxidase family.

The protein localises to the cell membrane. It catalyses the reaction 4 Fe(II)-[cytochrome c] + O2 + 8 H(+)(in) = 4 Fe(III)-[cytochrome c] + 2 H2O + 4 H(+)(out). Its pathway is energy metabolism; oxidative phosphorylation. The polypeptide is Probable cytochrome c oxidase subunit 1 (Bradyrhizobium diazoefficiens (strain JCM 10833 / BCRC 13528 / IAM 13628 / NBRC 14792 / USDA 110)).